A 109-amino-acid chain; its full sequence is Transcription initiation factor IIA subunit 2 (109 aa).

This sequence belongs to the TFIIA subunit 2 family. As to quaternary structure, TFIIA is a heterodimer of the large unprocessed subunit 1 and a small subunit gamma. It was originally believed to be a heterotrimer of an alpha (p35), a beta (p19) and a gamma subunit (p12). Interacts with NCOA6 general coactivator. TFIIA forms a complex with TBP. Interacts with HSF1 (via transactivation domain). Part of TBP-based Pol II pre-initiation complex (PIC), in which Pol II core assembles with general transcription factors and other specific initiation factors including GTF2E1, GTF2E2, GTF2F1, GTF2F2, TCEA1, ERCC2, ERCC3, GTF2H2, GTF2H3, GTF2H4, GTF2H5, GTF2A1, GTF2A2, GTF2B and TBP; this large multi-subunit PIC complex mediates DNA unwinding and targets Pol II core to the transcription start site where the first phosphodiester bond forms. (Microbial infection) Interacts with SV40 Large T antigen.

Its subcellular location is the nucleus. Its function is as follows. TFIIA is a component of the transcription machinery of RNA polymerase II and plays an important role in transcriptional activation. TFIIA in a complex with TBP mediates transcriptional activity. The sequence is that of Transcription initiation factor IIA subunit 2 (GTF2A2) from Homo sapiens (Human).